We begin with the raw amino-acid sequence, 150 residues long: SsrA-binding protein (150 aa).

The interval 129–150 is disordered; it reads KRQTLKSKEADREMARALRDRH.

Belongs to the SmpB family.

The protein resides in the cytoplasm. Required for rescue of stalled ribosomes mediated by trans-translation. Binds to transfer-messenger RNA (tmRNA), required for stable association of tmRNA with ribosomes. tmRNA and SmpB together mimic tRNA shape, replacing the anticodon stem-loop with SmpB. tmRNA is encoded by the ssrA gene; the 2 termini fold to resemble tRNA(Ala) and it encodes a 'tag peptide', a short internal open reading frame. During trans-translation Ala-aminoacylated tmRNA acts like a tRNA, entering the A-site of stalled ribosomes, displacing the stalled mRNA. The ribosome then switches to translate the ORF on the tmRNA; the nascent peptide is terminated with the 'tag peptide' encoded by the tmRNA and targeted for degradation. The ribosome is freed to recommence translation, which seems to be the essential function of trans-translation. The polypeptide is SsrA-binding protein (Syntrophotalea carbinolica (strain DSM 2380 / NBRC 103641 / GraBd1) (Pelobacter carbinolicus)).